The sequence spans 271 residues: Proteasome inhibitor PI31 subunit (271 aa).

Residue alanine 2 is modified to N-acetylalanine. Positions 2-150 are important for homodimerization and interaction with FBXO7; that stretch reads AGLEVLFASA…PIHEQWEKAN (149 aa). Residue serine 153 is modified to Phosphoserine. Arginine 205 carries the omega-N-methylarginine modification. Arginine 219 is modified (asymmetric dimethylarginine). The disordered stretch occupies residues 222–271; that stretch reads IDPSSGLPNRLPPGAVPPGARFDPFGPIGTSPPGPNPDHLPPPGYDDMYL. Position 231 is an omega-N-methylarginine (arginine 231). Residues 251-265 show a composition bias toward pro residues; that stretch reads TSPPGPNPDHLPPPG. Phosphoserine is present on serine 252.

This sequence belongs to the proteasome inhibitor PI31 family. In terms of assembly, monomer and homodimer. Interacts with FBXO7.

The protein localises to the cytoplasm. It localises to the endoplasmic reticulum. In terms of biological role, plays an important role in control of proteasome function. Inhibits the hydrolysis of protein and peptide substrates by the 20S proteasome. Also inhibits the activation of the proteasome by the proteasome regulatory proteins PA700 and PA28. The polypeptide is Proteasome inhibitor PI31 subunit (PSMF1) (Pongo abelii (Sumatran orangutan)).